Here is a 510-residue protein sequence, read N- to C-terminus: GMP synthase [glutamine-hydrolyzing] (510 aa).

The 192-residue stretch at 3-194 (QILILDFGSQ…ARVICGYKEK (192 aa)) folds into the Glutamine amidotransferase type-1 domain. Residue cysteine 80 is the Nucleophile of the active site. Catalysis depends on residues histidine 168 and glutamate 170. A GMPS ATP-PPase domain is found at 195–385 (WTPASIMTAS…LGLGSEIVDI (191 aa)). 222–228 (SGGVDSS) serves as a coordination point for ATP.

As to quaternary structure, homodimer.

It carries out the reaction XMP + L-glutamine + ATP + H2O = GMP + L-glutamate + AMP + diphosphate + 2 H(+). Its pathway is purine metabolism; GMP biosynthesis; GMP from XMP (L-Gln route): step 1/1. Catalyzes the synthesis of GMP from XMP. This is GMP synthase [glutamine-hydrolyzing] from Elusimicrobium minutum (strain Pei191).